Consider the following 350-residue polypeptide: ATPase GET3 (350 aa).

An ATP-binding site is contributed by 26–33; the sequence is KGGVGKTT. The active site involves aspartate 57. The ATP site is built by glutamate 243 and asparagine 270. Residues cysteine 282 and cysteine 285 each contribute to the Zn(2+) site.

Belongs to the arsA ATPase family. In terms of assembly, homodimer. Component of the Golgi to ER traffic (GET) complex, which is composed of GET1, GET2 and GET3. Within the complex, GET1 and GET2 form a heterotetramer which is stabilized by phosphatidylinositol binding and which binds to the GET3 homodimer. Interacts with the chloride channel protein GEF1.

Its subcellular location is the cytoplasm. It is found in the endoplasmic reticulum. The protein resides in the golgi apparatus. In terms of biological role, ATPase required for the post-translational delivery of tail-anchored (TA) proteins to the endoplasmic reticulum. Recognizes and selectively binds the transmembrane domain of TA proteins in the cytosol. This complex then targets to the endoplasmic reticulum by membrane-bound receptors GET1 and GET2, where the tail-anchored protein is released for insertion. This process is regulated by ATP binding and hydrolysis. ATP binding drives the homodimer towards the closed dimer state, facilitating recognition of newly synthesized TA membrane proteins. ATP hydrolysis is required for insertion. Subsequently, the homodimer reverts towards the open dimer state, lowering its affinity for the GET1-GET2 receptor, and returning it to the cytosol to initiate a new round of targeting. Cooperates with the HDEL receptor ERD2 to mediate the ATP-dependent retrieval of resident ER proteins that contain a C-terminal H-D-E-L retention signal from the Golgi to the ER. Involved in low-level resistance to the oxyanions arsenite and arsenate, and in heat tolerance. The polypeptide is ATPase GET3 (Candida dubliniensis (strain CD36 / ATCC MYA-646 / CBS 7987 / NCPF 3949 / NRRL Y-17841) (Yeast)).